We begin with the raw amino-acid sequence, 363 residues long: Carbamoyl phosphate synthase small chain (363 aa).

The segment at Met-1–Arg-171 is CPSase. L-glutamine contacts are provided by Ser-39, Gly-219, and Gly-221. Residues Arg-171–Ser-359 enclose the Glutamine amidotransferase type-1 domain. The active-site Nucleophile is Cys-248. L-glutamine contacts are provided by Leu-249, Gln-252, Asn-290, Gly-292, and Tyr-293. Active-site residues include His-332 and Glu-334.

The protein belongs to the CarA family. In terms of assembly, composed of two chains; the small (or glutamine) chain promotes the hydrolysis of glutamine to ammonia, which is used by the large (or ammonia) chain to synthesize carbamoyl phosphate. Tetramer of heterodimers (alpha,beta)4.

The enzyme catalyses hydrogencarbonate + L-glutamine + 2 ATP + H2O = carbamoyl phosphate + L-glutamate + 2 ADP + phosphate + 2 H(+). It catalyses the reaction L-glutamine + H2O = L-glutamate + NH4(+). The protein operates within amino-acid biosynthesis; L-arginine biosynthesis; carbamoyl phosphate from bicarbonate: step 1/1. Its pathway is pyrimidine metabolism; UMP biosynthesis via de novo pathway; (S)-dihydroorotate from bicarbonate: step 1/3. Small subunit of the glutamine-dependent carbamoyl phosphate synthetase (CPSase). CPSase catalyzes the formation of carbamoyl phosphate from the ammonia moiety of glutamine, carbonate, and phosphate donated by ATP, constituting the first step of 2 biosynthetic pathways, one leading to arginine and/or urea and the other to pyrimidine nucleotides. The small subunit (glutamine amidotransferase) binds and cleaves glutamine to supply the large subunit with the substrate ammonia. In Symbiobacterium thermophilum (strain DSM 24528 / JCM 14929 / IAM 14863 / T), this protein is Carbamoyl phosphate synthase small chain.